A 349-amino-acid polypeptide reads, in one-letter code: Cobalt-precorrin-5B C(1)-methyltransferase (349 aa).

Belongs to the CbiD family.

The enzyme catalyses Co-precorrin-5B + S-adenosyl-L-methionine = Co-precorrin-6A + S-adenosyl-L-homocysteine. It participates in cofactor biosynthesis; adenosylcobalamin biosynthesis; cob(II)yrinate a,c-diamide from sirohydrochlorin (anaerobic route): step 6/10. Functionally, catalyzes the methylation of C-1 in cobalt-precorrin-5B to form cobalt-precorrin-6A. This chain is Cobalt-precorrin-5B C(1)-methyltransferase, found in Saccharolobus solfataricus (strain ATCC 35092 / DSM 1617 / JCM 11322 / P2) (Sulfolobus solfataricus).